The primary structure comprises 359 residues: Protein mab-21-like 2-A (359 aa).

The protein belongs to the mab-21 family.

The protein resides in the nucleus. Its subcellular location is the cytoplasm. Its function is as follows. Required for normal development of the eye. May promote dorsalization of the developing embryo by antagonizing the ventralizing factor bmp4. Functional antagonism of bmp4 may require interaction with smad1. Required for gastrulation and subsequent neural development. May function as a transcriptional repressor. This is Protein mab-21-like 2-A (mab21l2-a) from Xenopus laevis (African clawed frog).